The chain runs to 180 residues: MKMLLLLCLGLTLVCVHAEEASSTGRNFNVEKINGEWHTIILASDKREKIEEHGNFRLFLEQIHVLENSLVLKVHTVRDEECSELSMVADKTEKAGEYSVTYDGFNTFTIPKTDYDNFLMAHLINEKDGETFQLMGLYGREPDLSSDIKERFAQLCEEHGILRENIIDLSNANRCLQARE.

A signal peptide spans 1–18 (MKMLLLLCLGLTLVCVHA). A disulfide bond links Cys-82 and Cys-175.

The protein belongs to the calycin superfamily. Lipocalin family. As to expression, because of their involvement in the coordination of social behavior, Mup proteins are thought to exhibit variable expression depending upon gender, age and status of the studied individuals. Expression may also be strain-specific: in strains C57BL/6J and 129S7, transcriptional support is lacking for Mup17.

It localises to the secreted. In terms of biological role, major urinary proteins (Mups) bind pheromones, thus stabilize them and allow slow release into the air from urine marks. May protect pheromones from oxidation. May also act as pheromones themselves. In this context, they play a role in the regulation of social behaviors, such as aggression, mating, pup-suckling, territory establishment and dominance. This is Major urinary protein 17 (Mup17) from Mus musculus (Mouse).